We begin with the raw amino-acid sequence, 205 residues long: Large ribosomal subunit protein uL4 (205 aa).

Positions 43-97 (GKRQGTSKVKNRSAVRGGGKKPWRQKGTGRARQGSIRAPQWRGGGTVFGPTPRSY) are disordered. Basic residues predominate over residues 51-71 (VKNRSAVRGGGKKPWRQKGTG).

This sequence belongs to the universal ribosomal protein uL4 family. Part of the 50S ribosomal subunit.

In terms of biological role, one of the primary rRNA binding proteins, this protein initially binds near the 5'-end of the 23S rRNA. It is important during the early stages of 50S assembly. It makes multiple contacts with different domains of the 23S rRNA in the assembled 50S subunit and ribosome. Forms part of the polypeptide exit tunnel. The protein is Large ribosomal subunit protein uL4 of Lactobacillus acidophilus (strain ATCC 700396 / NCK56 / N2 / NCFM).